The sequence spans 528 residues: MLGRTLQEVSAALKQGQITPTELCQKCLSLIKKTKFLNAYITVSEEVALKQAEESEKRYKNGQSLGDLDGIPVAVKDNFSTSGIETTCASNMLKGYIPPYNATVVQKLLDQGALLMGKTNLDEFAMGSGSTDGIFGPVKNPWSYSKQYREKRKQNPHSKNEDSDWLITGGSSGGSAAAVSAFTCYAALGSDTGGSTRNPAAHCGLVGFKPSYGLVSRHGLIPLVNSMDVPGILTRCVDDAAIVLGALAGPDPKDSTTVHDPINKPFMLPSLADVSKLCIGIPKEYLIPELSSEVRSLWSKAADLFESEGAKVLEVSLPHTSYSIVCYHVLCTSEVASNMARFDGLQYGHRCDINVSTEAMYAATRREGFNDVVRGRILSGNFFLLKENYENYFVKAQKVRRLIANDFVNAFNSGVDVLLTPTTLSEAVPYLEFIKEDNRTRSAQDDIFTQAVNMAGLPAVSIPVALSNQGLPIGLQFIGRAFCDQQLLTVAKWFEKQVQFPFIQLQELMDDCSAVLENEKSASVSLKQ.

The Charge relay system role is filled by Lys76. Positions 147-166 (QYREKRKQNPHSKNEDSDWL) are disordered. Residue Ser171 is the Charge relay system of the active site. The active-site Acyl-ester intermediate is the Ser195.

The protein belongs to the amidase family. GatA subfamily. Subunit of the heterotrimeric GatCAB amidotransferase (AdT) complex, composed of A (QRSL1), B (GATB) and C (GATC) subunits.

It is found in the mitochondrion. The enzyme catalyses L-glutamyl-tRNA(Gln) + L-glutamine + ATP + H2O = L-glutaminyl-tRNA(Gln) + L-glutamate + ADP + phosphate + H(+). In terms of biological role, allows the formation of correctly charged Gln-tRNA(Gln) through the transamidation of misacylated Glu-tRNA(Gln) in the mitochondria. The reaction takes place in the presence of glutamine and ATP through an activated gamma-phospho-Glu-tRNA(Gln). The protein is Glutamyl-tRNA(Gln) amidotransferase subunit A, mitochondrial of Macaca fascicularis (Crab-eating macaque).